The sequence spans 477 residues: Homeobox protein Meis2 (477 aa).

Residues 71 to 191 (DALKRDKDAI…KMPIDLVIDE (121 aa)) are required for interaction with PBX1. An MEIS N-terminal domain is found at 110–193 (GGDVCSSDSF…PIDLVIDERD (84 aa)). Residues 193–203 (DGSSKSDHEEL) show a composition bias toward basic and acidic residues. A disordered region spans residues 193-283 (DGSSKSDHEE…KKRQKKRGIF (91 aa)). Composition is skewed to polar residues over residues 204–217 (SGSS…NPSS) and 239–251 (GHAS…SSEQ). The segment at residues 276–338 (RQKKRGIFPK…NARRRIVQPM (63 aa)) is a DNA-binding region (homeobox; TALE-type). An interaction with DNA region spans residues 299-333 (LTHPYPSEEQKKQLAQDTGLTILQVNNWFINARRR). The interval 340 to 477 (DQSNRAGFLL…GGQVMDIHAQ (138 aa)) is transcriptional activation domain.

It belongs to the TALE/MEIS homeobox family. As to quaternary structure, monomer and homodimer. Heterodimer with HOXB13. Isoform 2 interacts with TLX1. Isoform 3 interacts with HOXA13 and PBX1 isoform PBX1b. Isoform 4 interacts with SP1, SP3 and KLF4. Isoform 4 and isoform 5 interact with PBX1 isoform PBX1a; the interaction partially relieves MEIS2 autoinhibition. Isoform 3 also known as MEIS2b is part of a PDX1:PBX1b:Meis2B complex; Meis2B is recruited by PBX1b and can be replaced by isoform 4 in a small fraction of complexes. Can form trimeric complexes including HOXB8 and PBX2 or PBX3. As to expression, expressed in various tissues. Expressed at high level in the lymphoid organs of hematopoietic tissues. Also expressed in some regions of the brain, such as the putamen.

The protein resides in the nucleus. The protein localises to the cytoplasm. Its subcellular location is the perinuclear region. Functionally, involved in transcriptional regulation. Binds to HOX or PBX proteins to form dimers, or to a DNA-bound dimer of PBX and HOX proteins and thought to have a role in stabilization of the homeoprotein-DNA complex. Isoform 3 is required for the activity of a PDX1:PBX1b:MEIS2b complex in pancreatic acinar cells involved in the transcriptional activation of the ELA1 enhancer; the complex binds to the enhancer B element and cooperates with the transcription factor 1 complex (PTF1) bound to the enhancer A element; MEIS2 is not involved in complex DNA-binding. Probably in complex with PBX1, is involved in transcriptional regulation by KLF4. Isoform 3 and isoform 4 can bind to a EPHA8 promoter sequence containing the DNA motif 5'-CGGTCA-3'; in cooperation with a PBX protein (such as PBX2) is proposed to be involved in the transcriptional activation of EPHA8 in the developing midbrain. May be involved in regulation of myeloid differentiation. Can bind to the DNA sequence 5'-TGACAG-3'in the activator ACT sequence of the D(1A) dopamine receptor (DRD1) promoter and activate DRD1 transcription; isoform 5 cannot activate DRD1 transcription. This Homo sapiens (Human) protein is Homeobox protein Meis2 (MEIS2).